Reading from the N-terminus, the 991-residue chain is Nonsense-mediated mRNA decay factor SMG8 (991 aa).

Disordered regions lie at residues 16-41, 82-127, and 279-299; these read AWMG…PEPP, HQDP…EGNR, and PPRN…PKRR. Residues 95-110 show a composition bias toward low complexity; it reads EAGAVGEAGGAEDPGA. The residue at position 115 (Ser-115) is a Phosphoserine. Positions 279–289 are enriched in basic and acidic residues; it reads PPRNQDPAHPD. Positions 290-299 are enriched in basic residues; it reads KPKKHSPKRR. Phosphoserine is present on residues Ser-469 and Ser-668. The interval 653–722 is disordered; that stretch reads FEPSTPDPAP…PQAGGDNPEV (70 aa). The span at 675–684 shows a compositional bias: basic and acidic residues; that stretch reads DADKLKEKEP. Positions 685 to 706 are enriched in polar residues; it reads QTQGESTSLSLALSLGQSTDSL. 2 positions are modified to phosphoserine: Ser-742 and Ser-895. Arg-898 carries the omega-N-methylarginine modification.

It belongs to the SMG8 family. As to quaternary structure, component of the SMG1C complex composed of SMG1, SMG8 and SMG9; the recruitment of SMG8 to SMG1 N-terminus induces a large conformational change in the SMG1 C-terminal head domain containing the catalytic domain. Forms heterodimers with SMG9; this assembly form may represent a SMG1C intermediate form. Post-translationally, phosphorylated by SMG1.

Its function is as follows. Involved in nonsense-mediated decay (NMD) of mRNAs containing premature stop codons. Is recruited by release factors to stalled ribosomes together with SMG1 and SMG9 (forming the SMG1C protein kinase complex) and, in the SMG1C complex, is required to mediate the recruitment of SMG1 to the ribosome:SURF complex and to suppress SMG1 kinase activity until the ribosome:SURF complex locates the exon junction complex (EJC). Acts as a regulator of kinase activity. In Homo sapiens (Human), this protein is Nonsense-mediated mRNA decay factor SMG8 (SMG8).